Reading from the N-terminus, the 362-residue chain is Prostaglandin F2-alpha receptor (362 aa).

At 1–31 the chain is on the extracellular side; the sequence is MSTNSSIQPVSPESELLSNTTCQLEEDLSIS. Residues asparagine 4 and asparagine 19 are each glycosylated (N-linked (GlcNAc...) asparagine). A helical membrane pass occupies residues 32–54; it reads FSIIFMTVGILSNSLAIAILMKA. At 55-69 the chain is on the cytoplasmic side; that stretch reads YQRFRQKYKSSFLLL. The helical transmembrane segment at 70–90 threads the bilayer; that stretch reads ASALVITDFFGHLINGTIAVF. Residues 91-109 are Extracellular-facing; that stretch reads VYASDKDWIYFDKSNILCS. A disulfide bond links cysteine 108 and cysteine 186. The helical transmembrane segment at 110 to 131 threads the bilayer; the sequence is IFGICMVFSGLCPLFLGSLMAI. Residues 132–152 lie on the Cytoplasmic side of the membrane; sequence ERCIGVTKPIFHSTKITTKHV. A helical membrane pass occupies residues 153 to 175; that stretch reads KMMLSGVCFFAVFVALLPILGHR. Residues 176–198 are Extracellular-facing; that stretch reads DYKIQASRTWCFYKTDEIKDWED. A helical transmembrane segment spans residues 199–224; it reads RFYLLLFAFLGLLALGISFVCNAITG. Residues 225-250 lie on the Cytoplasmic side of the membrane; the sequence is ISLLKVKFRSQQHRQGRSHHFEMVIQ. Residues 251–267 form a helical membrane-spanning segment; it reads LLGIMCVSCICWSPFLV. Over 268 to 285 the chain is Extracellular; it reads TMASIGMNIQDFKDSCER. A helical transmembrane segment spans residues 286–307; it reads TLFTLRMATWNQILDPWVYILL. Topologically, residues 308–362 are cytoplasmic; that stretch reads RKAVLRNLYVCTRRCCGVHVISLHVWELSSIKDSLKVAAISDLPVTEKVTQQTST.

It belongs to the G-protein coupled receptor 1 family.

Its subcellular location is the cell membrane. In terms of biological role, receptor for prostaglandin F2-alpha (PGF2-alpha). The activity of this receptor is mediated by G proteins which activate a phosphatidylinositol-calcium second messenger system. Initiates luteolysis in the corpus luteum. The protein is Prostaglandin F2-alpha receptor (PTGFR) of Bos taurus (Bovine).